A 504-amino-acid polypeptide reads, in one-letter code: MTSTRTLRYAQVACACIWCLFSAGIIFGFAALKPILISEGVYHELCDPKDGDRLLCTAQDLKLNFIFALSATVTNIMALPVGKILDMYGPRVCGIIGSCLLFLASGNFISAKHLVSLWDPYLVGYTLLAVAGPFVFISCFQLANSFPQRSGTVLALLTGSFDSSSALFLLYRLLYQNWFPTLNVSRFFTLYLIVPVFILACQLTIMPHSSYKTVNHIAKIAVEGLDENGRLIEGDTGSGIIPDEQERQSLIAIEREEDSIPSRPQRRKSVLETYVEDKLQKKSGGIFGVLHGKSAYEQIKSPWFYLMLLFALVAMLRINYFIATVRTQEEYLLNDPDLALKLNSIFDMLLPLGGAVSIPFIGLLLDHTDTLSTLTILFTTSTAIGVFGLIPNSFTWNLIGIVLLVVYRPFYYTVVSDYSSKVFGFDTFGTVYGLLSCICGIFNMSQNLLDKWTHTTFNMNPFPINLTLVILTVVFSLTLTFYIRSQILPKPVNERGLSSNYQTI.

Topologically, residues 1 to 11 (MTSTRTLRYAQ) are vacuolar. The helical transmembrane segment at 12 to 32 (VACACIWCLFSAGIIFGFAAL) threads the bilayer. At 33 to 64 (KPILISEGVYHELCDPKDGDRLLCTAQDLKLN) the chain is on the cytoplasmic side. A helical membrane pass occupies residues 65-85 (FIFALSATVTNIMALPVGKIL). Over 86–91 (DMYGPR) the chain is Vacuolar. The helical transmembrane segment at 92 to 112 (VCGIIGSCLLFLASGNFISAK) threads the bilayer. Residues 113 to 119 (HLVSLWD) are Cytoplasmic-facing. A helical transmembrane segment spans residues 120–140 (PYLVGYTLLAVAGPFVFISCF). Topologically, residues 141–150 (QLANSFPQRS) are vacuolar. The chain crosses the membrane as a helical span at residues 151–171 (GTVLALLTGSFDSSSALFLLY). Residues 172–186 (RLLYQNWFPTLNVSR) lie on the Cytoplasmic side of the membrane. Residues 187-207 (FFTLYLIVPVFILACQLTIMP) traverse the membrane as a helical segment. Residues 208–302 (HSSYKTVNHI…KSAYEQIKSP (95 aa)) are Vacuolar-facing. S238, S249, and S269 each carry phosphoserine. A helical membrane pass occupies residues 303-323 (WFYLMLLFALVAMLRINYFIA). Topologically, residues 324-344 (TVRTQEEYLLNDPDLALKLNS) are cytoplasmic. Residues 345-365 (IFDMLLPLGGAVSIPFIGLLL) form a helical membrane-spanning segment. The Vacuolar portion of the chain corresponds to 366-385 (DHTDTLSTLTILFTTSTAIG). Residues 386-406 (VFGLIPNSFTWNLIGIVLLVV) traverse the membrane as a helical segment. The Cytoplasmic segment spans residues 407–421 (YRPFYYTVVSDYSSK). The chain crosses the membrane as a helical span at residues 422-442 (VFGFDTFGTVYGLLSCICGIF). At 443–462 (NMSQNLLDKWTHTTFNMNPF) the chain is on the vacuolar side. Residues 463–483 (PINLTLVILTVVFSLTLTFYI) form a helical membrane-spanning segment. Residues 484–504 (RSQILPKPVNERGLSSNYQTI) lie on the Cytoplasmic side of the membrane.

It belongs to the SLC43A transporter (TC 2.A.1.44) family.

The protein resides in the vacuole membrane. The polypeptide is Protein FMP42 (FMP42) (Saccharomyces cerevisiae (strain ATCC 204508 / S288c) (Baker's yeast)).